The primary structure comprises 227 residues: Probable septum site-determining protein MinC (227 aa).

Belongs to the MinC family. As to quaternary structure, interacts with MinD and FtsZ.

Functionally, cell division inhibitor that blocks the formation of polar Z ring septums. Rapidly oscillates between the poles of the cell to destabilize FtsZ filaments that have formed before they mature into polar Z rings. Prevents FtsZ polymerization. In Geobacillus thermodenitrificans (strain NG80-2), this protein is Probable septum site-determining protein MinC.